Here is a 319-residue protein sequence, read N- to C-terminus: Acetyl esterase (319 aa).

Residues His-91–Gly-93 carry the Involved in the stabilization of the negatively charged intermediate by the formation of the oxyanion hole motif. Residues Ser-165, Asp-262, and His-292 contribute to the active site.

It belongs to the 'GDXG' lipolytic enzyme family. Homodimer. Interacts with MalT and MelA.

The protein localises to the cytoplasm. Its function is as follows. Displays esterase activity towards short chain fatty esters (acyl chain length of up to 8 carbons). Able to hydrolyze triacetylglycerol (triacetin) and tributyrylglycerol (tributyrin), but not trioleylglycerol (triolein) or cholesterol oleate. Negatively regulates MalT activity by antagonizing maltotriose binding. Inhibits MelA galactosidase activity. The sequence is that of Acetyl esterase from Escherichia coli O6:H1 (strain CFT073 / ATCC 700928 / UPEC).